The following is a 206-amino-acid chain: Probable glutathione S-transferase 9 (206 aa).

Positions 2 to 79 (VSYKLIYFQS…YLSKQFGISG (78 aa)) constitute a GST N-terminal domain. Glutathione contacts are provided by residues Y8, W39, K43, 49–51 (GQV), and 63–64 (QS). The GST C-terminal domain maps to 81–206 (SSWEEAQVDA…WIEKRPVTSR (126 aa)).

The protein belongs to the GST superfamily. Sigma family.

The enzyme catalyses RX + glutathione = an S-substituted glutathione + a halide anion + H(+). Conjugation of reduced glutathione to a wide number of exogenous and endogenous hydrophobic electrophiles. The chain is Probable glutathione S-transferase 9 (gst-9) from Caenorhabditis elegans.